Reading from the N-terminus, the 365-residue chain is Outer membrane porin protein LC (365 aa).

The first 23 residues, 1 to 23 (MKKLTVAISAVAASVLMAMSAQA), serve as a signal peptide directing secretion.

This sequence belongs to the Gram-negative porin family. Homotrimer.

The protein localises to the host cell outer membrane. In terms of biological role, forms pores that allow passive diffusion of small molecules across the host cell outer membrane. The chain is Outer membrane porin protein LC (LC) from Enterobacteria phage PA-2 (Bacteriophage PA-2).